Reading from the N-terminus, the 613-residue chain is Ribosome-associated molecular chaperone SSB1 (613 aa).

Positions 1–391 are nucleotide binding domain (NBD); sequence MAEGVFPGAI…ILTGQSTSDE (391 aa). ATP is bound by residues 16–18, Lys73, 205–207, 271–278, and Gly342; these read TTY, GGT, and ERAKRTLS. The inter-domain linker stretch occupies residues 392 to 402; it reads TKDLLLLDVAP. Residues 403–613 are substrate binding domain (SBD); that stretch reads LSLGVGMAGD…RAVTKAMSTR (211 aa). Positions 516–612 are lid domain (SBDalpha); the sequence is SEEIEQMVNQ…KRAVTKAMST (97 aa). A Nuclear export signal motif is present at residues 574–582; it reads VEAALADAF.

Belongs to the heat shock protein 70 family. Ssb-type Hsp70 subfamily. In terms of assembly, binds to ribosomes. Binds close to the ribosomal tunnel exit via contacts with both ribosomal proteins and rRNA. Directly interacts with nascent polypeptides. This interaction is dependent on the ribosome-associated complex (RAC). Interacts with SSE1. Interacts with FES1.

The protein resides in the cytoplasm. The enzyme catalyses ATP + H2O = ADP + phosphate + H(+). Ribosome-bound, Hsp70-type chaperone that assists in the cotranslational folding of newly synthesized proteins in the cytosol. Stimulates folding by interacting with nascent chains, binding to short, largely hydrophobic sequences exposed by unfolded proteins, thereby stabilizing longer, more slowly translated, and aggregation-prone nascent polypeptides and domains that cannot fold stably until fully synthesized. The Hsp70-protein substrate interaction depends on ATP-binding and on allosteric regulation between the NBD and the SBD. The ATP-bound state is characterized by a fast exchange rate of substrate (low affinity state), while in the ADP-bound state exchange is much slower (high affinity state). During the Hsp70 cycle, the chaperone switches between the ATP-bound state (open conformation) and the ADP-bound state (closed conformation) by major conformational rearrangements involving mainly the lid domain. Ssb cooperates with a specific Hsp40/Hsp70 co-chaperone termed the ribosome-associated complex (RAC), which stimulates the ATPase activity of the ribosome-associated pool of Ssbs and switches it to the high affinity substrate binding state. Hsp110 chaperone SSE1 and FES1 act as nucleotide exchange factors that cause substrate release. The protein is Ribosome-associated molecular chaperone SSB1 (SSB1) of Kluyveromyces marxianus (Yeast).